Consider the following 350-residue polypeptide: MTVSPVALRRKTECKPHPTARYWKKCDVEALFGLPFLELVHQAAEVHRQNFNPREIQLSTLLSIKTGGCPEDCAYCPQSAHHNTNLGKEQMMDVDEIVEKAKIAKSRGASRFCMGAAWRGPKPKDVETVSAIIKAVKGLGMETCGTFGMLEEGMAEDLKEAGLDYYNHNLDTDPDRYNDIIHTRRHEDRMDTLGKVRNAGLKVCCGGIVGMNETRAERAGLIASLANLDPQPESVPINRLVKVEGTPLADAEDLDWTEFVRTIAVARITMPQSYVRLSAGRSNMPEAMQAMCFMAGANSIFYGDKLLTTGNPDEDGDRILMEKLNLYPLQFELEGEVAEVEKASGIKVDY.

Positions 54 to 278 constitute a Radical SAM core domain; it reads REIQLSTLLS…TMPQSYVRLS (225 aa). C69, C73, and C76 together coordinate [4Fe-4S] cluster. Positions 113, 144, 204, and 276 each coordinate [2Fe-2S] cluster.

This sequence belongs to the radical SAM superfamily. Biotin synthase family. As to quaternary structure, homodimer. Requires [4Fe-4S] cluster as cofactor. [2Fe-2S] cluster serves as cofactor.

It catalyses the reaction (4R,5S)-dethiobiotin + (sulfur carrier)-SH + 2 reduced [2Fe-2S]-[ferredoxin] + 2 S-adenosyl-L-methionine = (sulfur carrier)-H + biotin + 2 5'-deoxyadenosine + 2 L-methionine + 2 oxidized [2Fe-2S]-[ferredoxin]. It participates in cofactor biosynthesis; biotin biosynthesis; biotin from 7,8-diaminononanoate: step 2/2. Functionally, catalyzes the conversion of dethiobiotin (DTB) to biotin by the insertion of a sulfur atom into dethiobiotin via a radical-based mechanism. The polypeptide is Biotin synthase (Neisseria meningitidis serogroup C / serotype 2a (strain ATCC 700532 / DSM 15464 / FAM18)).